A 465-amino-acid polypeptide reads, in one-letter code: Ribulose bisphosphate carboxylase large chain (465 aa).

The residue at position 4 (Lys4) is an N6,N6,N6-trimethyllysine. Substrate is bound by residues Asn113 and Thr163. Residue Lys165 is the Proton acceptor of the active site. Residue Lys167 participates in substrate binding. Residues Lys191, Asp193, and Glu194 each contribute to the Mg(2+) site. Residue Lys191 is modified to N6-carboxylysine. The active-site Proton acceptor is the His284. 3 residues coordinate substrate: Arg285, His317, and Ser369.

This sequence belongs to the RuBisCO large chain family. Type I subfamily. Heterohexadecamer of 8 large chains and 8 small chains; disulfide-linked. The disulfide link is formed within the large subunit homodimers. It depends on Mg(2+) as a cofactor. Post-translationally, the disulfide bond which can form in the large chain dimeric partners within the hexadecamer appears to be associated with oxidative stress and protein turnover.

The protein localises to the plastid. It is found in the chloroplast. The enzyme catalyses 2 (2R)-3-phosphoglycerate + 2 H(+) = D-ribulose 1,5-bisphosphate + CO2 + H2O. The catalysed reaction is D-ribulose 1,5-bisphosphate + O2 = 2-phosphoglycolate + (2R)-3-phosphoglycerate + 2 H(+). RuBisCO catalyzes two reactions: the carboxylation of D-ribulose 1,5-bisphosphate, the primary event in carbon dioxide fixation, as well as the oxidative fragmentation of the pentose substrate in the photorespiration process. Both reactions occur simultaneously and in competition at the same active site. The sequence is that of Ribulose bisphosphate carboxylase large chain from Platytheca verticillata.